The chain runs to 341 residues: Major histocompatibility complex class I-related protein 1 (341 aa).

An N-terminal signal peptide occupies residues 1-22 (MGELMAFLLPLIIVLMVKHSDS). The segment at 23 to 109 (RTHSLRYFRL…KRLQRHYNHS (87 aa)) is alpha-1. Residues 23-201 (RTHSLRYFRL…EYGKDILQRT (179 aa)) form an antigen-binding cleft region. Residues 23-302 (RTHSLRYFRL…QESETIPLVM (280 aa)) are Extracellular-facing. 8-(9H-purin-6-yl)-2-oxa-8-azabicyclo[3.3.1]nona-3,6-diene-4,6-dicarbaldehyde-binding residues include Tyr29 and Arg31. 3 residues coordinate 5-(2-oxoethylideneamino)-6-(D-ribitylamino)uracil: Arg31, Ser46, and Lys65. Residues Arg31, Ser46, and Lys65 each coordinate 5-(2-oxopropylideneamino)-6-(D-ribitylamino)uracil. 7-hydroxy-6-methyl-8-(1-D-ribityl)lumazine contacts are provided by Arg31, Ser46, and Lys65. Positions 65 and 80 each coordinate 8-(9H-purin-6-yl)-2-oxa-8-azabicyclo[3.3.1]nona-3,6-diene-4,6-dicarbaldehyde. Lys65 provides a ligand contact to 2-amino-4-oxopteridine-6-carbaldehyde. Lys65 is a binding site for pyridoxal. Residue Asn107 is glycosylated (N-linked (GlcNAc...) asparagine). The segment at 110–201 (GSHTYQRMIG…EYGKDILQRT (92 aa)) is alpha-2. Residue Arg116 coordinates 8-(9H-purin-6-yl)-2-oxa-8-azabicyclo[3.3.1]nona-3,6-diene-4,6-dicarbaldehyde. 3 residues coordinate 5-(2-oxoethylideneamino)-6-(D-ribitylamino)uracil: Arg116, Tyr174, and Gln175. 5-(2-oxopropylideneamino)-6-(D-ribitylamino)uracil is bound by residues Arg116, Tyr174, and Gln175. 7-hydroxy-6-methyl-8-(1-D-ribityl)lumazine contacts are provided by Arg116, Tyr174, and Gln175. Cystine bridges form between Cys120–Cys183 and Cys222–Cys278. Residues 202–293 (EPPLVRVNRK…GVHMVLQVPQ (92 aa)) form an alpha-3 region. The region spanning 203–299 (PPLVRVNRKE…QVPQESETIP (97 aa)) is the Ig-like C1-type domain. Positions 294–302 (ESETIPLVM) are connecting peptide. Residues 303–323 (KAVSGSIVLVIVLAGVGVLVW) traverse the membrane as a helical segment. Topologically, residues 324–341 (RRRPREQNGAIYLPTPDR) are cytoplasmic.

The protein belongs to the MHC class I family. Heterotrimer that consists of MR1, B2M and metabolite antigen. Major classes of metabolite ligands presented by MR1 include riboflavin-related antigens, pyrimidines and ribityl lumazines, nucleobase adducts and folate derivatives. Forms reversible covalent Schiff base complexes with microbial pyrimidine-based metabolite, which serves as a molecular switch triggering complete folding, stable association with B2M and translocation of the ternary complex from endoplasmic reticulum to the plasma membrane. Alternatively, forms non-Schiff base complexes with ribityl lumazines. On antigen-presenting cells, the ternary complex interacts with TCR on MR1-restricted T cells. Interacts with TAPBP and TAPBPL chaperones in the endoplasmic reticulum. TAPBP associated or not with MHC class I peptide loading complex binds ligand-free MR1 or MR1-B2M complex, providing for stable MR1 pools ready for metabolite antigen processing. TAPBPL interacts with MR1 in a ligand-independent way; this interaction may stabilize MR1 pool and facilitate ligand loading and dissociation. Structurally, MR1-B2M heterodimer adopts a topology similar to classical MHC class I molecules, with alpha-1 and alpha-2 domains of MR1 forming the antigen-binding cleft composed of two alpha-helices resting on a floor of 7-stranded anti-parallel beta-pleated sheet. MR1-B2M heterodimer (via alpha-helices) interacts with TCR (via CDR domains). In terms of processing, N-glycosylated.

It is found in the cell membrane. Its subcellular location is the endoplasmic reticulum membrane. The protein localises to the golgi apparatus membrane. The protein resides in the early endosome membrane. It localises to the late endosome membrane. Antigen-presenting molecule specialized in displaying microbial pyrimidine-based metabolites to alpha-beta T cell receptors (TCR) on innate-type mucosal-associated invariant T (MAIT) cells. In complex with B2M preferentially presents riboflavin-derived metabolites to semi-invariant TCRs on MAIT cells, guiding immune surveillance of the microbial metabolome at mucosal epithelial barriers. Signature pyrimidine-based microbial antigens are generated via non-enzymatic condensation of metabolite intermediates of the riboflavin pathway with by-products arising from other metabolic pathways such as glycolysis. Typical potent antigenic metabolites are 5-(2-oxoethylideneamino)-6-D-ribitylaminouracil (5-OE-RU) and 5-(2-oxopropylideneamino)-6-D-ribitylaminouracil (5-OP-RU), products of condensation of 5-amino-6-D-ribityaminouracil (5-A-RU) with glyoxal or methylglyoxal by-products, respectively. May present microbial antigens to various MAIT cell subsets, providing for unique recognition of diverse microbes, including pathogens that do not synthesize riboflavin. Upon antigen recognition, elicits rapid innate-type MAIT cell activation to eliminate pathogenic microbes by directly killing infected cells. During T cell development, drives thymic selection and post-thymic terminal differentiation of MAIT cells in a process dependent on commensal microflora. Acts as an immune sensor of cancer cell metabolome. May present a tumor-specific or -associated metabolite essential for cancer cell survival to a pan-cancer TCR on a non-MAIT CD8-positive T cell clone, triggering T cell-mediated killing of a wide range of cancer cell types. May present tumor-enriched pyridoxal and pyridoxal 5'-phosphate antigens, enabling preferential recognition of cancer cells. Presents nucleobase carbonyl adducts generated during oxidative stress. Captures M3Ade, a nucleobase adduct composed of one adenine modified by a malondialdehyde trimer, for recognition by MR1-restricted T cell clones expressing a polyclonal TCR repertoire. The chain is Major histocompatibility complex class I-related protein 1 from Pan troglodytes (Chimpanzee).